The primary structure comprises 529 residues: Peptide chain release factor 3 (529 aa).

One can recognise a tr-type G domain in the interval 11-280; the sequence is AKRRTFAIIS…GLVKWAPAPM (270 aa). Residues 20 to 27, 88 to 92, and 142 to 145 contribute to the GTP site; these read SHPDAGKT, DTPGH, and NKLD.

This sequence belongs to the TRAFAC class translation factor GTPase superfamily. Classic translation factor GTPase family. PrfC subfamily.

It localises to the cytoplasm. Increases the formation of ribosomal termination complexes and stimulates activities of RF-1 and RF-2. It binds guanine nucleotides and has strong preference for UGA stop codons. It may interact directly with the ribosome. The stimulation of RF-1 and RF-2 is significantly reduced by GTP and GDP, but not by GMP. The protein is Peptide chain release factor 3 of Photorhabdus laumondii subsp. laumondii (strain DSM 15139 / CIP 105565 / TT01) (Photorhabdus luminescens subsp. laumondii).